The sequence spans 364 residues: Methylthioribose-1-phosphate isomerase (364 aa).

Substrate is bound by residues 46-48 (RGA), Arg89, and Gln196. Asp237 serves as the catalytic Proton donor. 247–248 (NK) is a binding site for substrate.

This sequence belongs to the eIF-2B alpha/beta/delta subunits family. MtnA subfamily.

It catalyses the reaction 5-(methylsulfanyl)-alpha-D-ribose 1-phosphate = 5-(methylsulfanyl)-D-ribulose 1-phosphate. It functions in the pathway amino-acid biosynthesis; L-methionine biosynthesis via salvage pathway; L-methionine from S-methyl-5-thio-alpha-D-ribose 1-phosphate: step 1/6. Functionally, catalyzes the interconversion of methylthioribose-1-phosphate (MTR-1-P) into methylthioribulose-1-phosphate (MTRu-1-P). The chain is Methylthioribose-1-phosphate isomerase from Pelotomaculum thermopropionicum (strain DSM 13744 / JCM 10971 / SI).